Here is a 230-residue protein sequence, read N- to C-terminus: V-type proton ATPase subunit E (230 aa).

This sequence belongs to the V-ATPase E subunit family. V-ATPase is a heteromultimeric enzyme composed of a peripheral catalytic V1 complex (components A to H) attached to an integral membrane V0 proton pore complex (components: a, c, c', c'', d, e, f and VOA1).

It localises to the vacuole membrane. Functionally, subunit of the V1 complex of vacuolar(H+)-ATPase (V-ATPase), a multisubunit enzyme composed of a peripheral complex (V1) that hydrolyzes ATP and a membrane integral complex (V0) that translocates protons. V-ATPase is responsible for acidifying and maintaining the pH of intracellular compartments. This chain is V-type proton ATPase subunit E, found in Neurospora crassa (strain ATCC 24698 / 74-OR23-1A / CBS 708.71 / DSM 1257 / FGSC 987).